Here is a 323-residue protein sequence, read N- to C-terminus: Fructokinase-1 (323 aa).

Belongs to the carbohydrate kinase PfkB family. In terms of tissue distribution, expressed in stems, at higher levels in roots, and hardly detectable in leaves.

It carries out the reaction D-fructose + ATP = D-fructose 6-phosphate + ADP + H(+). Its pathway is glycan biosynthesis; starch biosynthesis. Inhibited at high fructose. Its function is as follows. May play an important role in maintaining the flux of carbon towards starch formation in endosperm. May also be involved in a sugar-sensing pathway. The sequence is that of Fructokinase-1 (FRK1) from Zea mays (Maize).